The primary structure comprises 296 residues: NAD kinase (296 aa).

D73 functions as the Proton acceptor in the catalytic mechanism. NAD(+) is bound by residues 73-74 (DG), K78, 151-152 (NE), R178, D180, and 191-196 (TAHAMS).

Belongs to the NAD kinase family. A divalent metal cation serves as cofactor.

It localises to the cytoplasm. The catalysed reaction is NAD(+) + ATP = ADP + NADP(+) + H(+). Functionally, involved in the regulation of the intracellular balance of NAD and NADP, and is a key enzyme in the biosynthesis of NADP. Catalyzes specifically the phosphorylation on 2'-hydroxyl of the adenosine moiety of NAD to yield NADP. This is NAD kinase from Francisella tularensis subsp. holarctica (strain FTNF002-00 / FTA).